A 328-amino-acid chain; its full sequence is Malate dehydrogenase (328 aa).

11-17 (GAAGQIG) is a binding site for NAD(+). Substrate contacts are provided by R92 and R98. NAD(+) contacts are provided by residues N105, Q112, and 129 to 131 (TGN). 2 residues coordinate substrate: N131 and R162. The active-site Proton acceptor is the H187.

This sequence belongs to the LDH/MDH superfamily. MDH type 2 family.

The enzyme catalyses (S)-malate + NAD(+) = oxaloacetate + NADH + H(+). Functionally, catalyzes the reversible oxidation of malate to oxaloacetate. This is Malate dehydrogenase from Paenarthrobacter aurescens (strain TC1).